Here is a 129-residue protein sequence, read N- to C-terminus: Protachykinin-1 (129 aa).

Positions 1 to 19 (MKILVALAVFFLVSTQLFA) are cleaved as a signal peptide. A propeptide spanning residues 20–56 (EEIGANDDLNYWSDWYDSDQIKEELPEPFEHLLQRIA) is cleaved from the precursor. Met-68 and Met-107 each carry methionine amide.

It belongs to the tachykinin family. Post-translationally, the substance P form is cleaved at Pro-59 by the prolyl endopeptidase FAP (seprase) activity (in vitro). Substance P is also cleaved and degraded by Angiotensin-converting enzyme (ACE) and neprilysin (MME).

It localises to the secreted. Tachykinins are active peptides which excite neurons, evoke behavioral responses, are potent vasodilators and secretagogues, and contract (directly or indirectly) many smooth muscles. The chain is Protachykinin-1 (TAC1) from Homo sapiens (Human).